The primary structure comprises 126 residues: Glycine cleavage system H protein (126 aa).

Residues 22 to 104 (VAIIGITEYA…YEKAWMVKVE (83 aa)) form the Lipoyl-binding domain. N6-lipoyllysine is present on K63.

The protein belongs to the GcvH family. In terms of assembly, the glycine cleavage system is composed of four proteins: P, T, L and H. It depends on (R)-lipoate as a cofactor.

The glycine cleavage system catalyzes the degradation of glycine. The H protein shuttles the methylamine group of glycine from the P protein to the T protein. In terms of biological role, is also involved in protein lipoylation via its role as an octanoyl/lipoyl carrier protein intermediate. The sequence is that of Glycine cleavage system H protein from Staphylococcus aureus (strain USA300).